The following is a 313-amino-acid chain: Pyrimidine-specific ribonucleoside hydrolase RihB (313 aa).

The active-site Proton acceptor is the Asp11. Residues Asp11, Asp16, and Val124 each contribute to the Ca(2+) site. Substrate is bound by residues Gln227 and His239. Residue Asp240 coordinates Ca(2+).

The protein belongs to the IUNH family. RihB subfamily. Homotetramer. Ca(2+) serves as cofactor.

The catalysed reaction is a pyrimidine ribonucleoside + H2O = a pyrimidine nucleobase + D-ribose. Functionally, hydrolyzes cytidine or uridine to ribose and cytosine or uracil, respectively. Has a clear preference for cytidine over uridine. Strictly specific for ribonucleosides. This is Pyrimidine-specific ribonucleoside hydrolase RihB from Escherichia coli (strain K12 / DH10B).